The primary structure comprises 453 residues: Chromosomal replication initiator protein DnaA (453 aa).

Residues 1–73 (MNISPQYLWN…AQEVASVVGY (73 aa)) form a domain I, interacts with DnaA modulators region. The tract at residues 73–112 (YPVDIQLTTAEGETMAMTGEAQSYQEKSLTQIAPESPKLN) is domain II. A domain III, AAA+ region region spans residues 113–329 (QLNPRYTFSR…GALIRAIAYT (217 aa)). Positions 157, 159, 160, and 161 each coordinate ATP. The domain IV, binds dsDNA stretch occupies residues 330–453 (SISGLSMTVQ…RINMASRTQS (124 aa)).

It belongs to the DnaA family. Oligomerizes as a right-handed, spiral filament on DNA at oriC.

It localises to the cytoplasm. Its function is as follows. Plays an essential role in the initiation and regulation of chromosomal replication. ATP-DnaA binds to the origin of replication (oriC) to initiate formation of the DNA replication initiation complex once per cell cycle. Binds the DnaA box (a 9 base pair repeat at the origin) and separates the double-stranded (ds)DNA. Forms a right-handed helical filament on oriC DNA; dsDNA binds to the exterior of the filament while single-stranded (ss)DNA is stabiized in the filament's interior. The ATP-DnaA-oriC complex binds and stabilizes one strand of the AT-rich DNA unwinding element (DUE), permitting loading of DNA polymerase. After initiation quickly degrades to an ADP-DnaA complex that is not apt for DNA replication. Binds acidic phospholipids. This chain is Chromosomal replication initiator protein DnaA, found in Rippkaea orientalis (strain PCC 8801 / RF-1) (Cyanothece sp. (strain PCC 8801)).